A 1075-amino-acid chain; its full sequence is Carbamoyl phosphate synthase large chain (1075 aa).

The segment at 1–403 (MPKRTDINTI…SLQKALRGLE (403 aa)) is carboxyphosphate synthetic domain. ATP contacts are provided by arginine 129, arginine 169, glycine 175, glycine 176, glutamine 208, valine 210, glutamate 215, glycine 241, valine 242, histidine 243, glutamine 285, and glutamate 299. The 196-residue stretch at 133–328 (KDAMTKIGLN…IAKVAAKLAV (196 aa)) folds into the ATP-grasp 1 domain. Glutamine 285, glutamate 299, and asparagine 301 together coordinate Mg(2+). Mn(2+) contacts are provided by glutamine 285, glutamate 299, and asparagine 301. The tract at residues 404–548 (IGICGFNLRS…YSTYEDECEA (145 aa)) is oligomerization domain. Residues 549-930 (KPTTRQKVMI…AYYKAQLGAG (382 aa)) are carbamoyl phosphate synthetic domain. An ATP-grasp 2 domain is found at 673-864 (QKILTDLGLK…LAKIAALVMA (192 aa)). The ATP site is built by arginine 709, histidine 748, leucine 750, glutamate 755, glycine 780, isoleucine 781, histidine 782, serine 783, glutamine 823, and glutamate 835. Mg(2+) contacts are provided by glutamine 823, glutamate 835, and asparagine 837. Mn(2+) is bound by residues glutamine 823, glutamate 835, and asparagine 837. Residues 931–1070 (ERIPSTGKVF…QQLHLSSALA (140 aa)) form the MGS-like domain. The segment at 931 to 1075 (ERIPSTGKVF…SSALANQITR (145 aa)) is allosteric domain.

It belongs to the CarB family. As to quaternary structure, composed of two chains; the small (or glutamine) chain promotes the hydrolysis of glutamine to ammonia, which is used by the large (or ammonia) chain to synthesize carbamoyl phosphate. Tetramer of heterodimers (alpha,beta)4. It depends on Mg(2+) as a cofactor. Mn(2+) is required as a cofactor.

It carries out the reaction hydrogencarbonate + L-glutamine + 2 ATP + H2O = carbamoyl phosphate + L-glutamate + 2 ADP + phosphate + 2 H(+). The enzyme catalyses hydrogencarbonate + NH4(+) + 2 ATP = carbamoyl phosphate + 2 ADP + phosphate + 2 H(+). The protein operates within amino-acid biosynthesis; L-arginine biosynthesis; carbamoyl phosphate from bicarbonate: step 1/1. Its pathway is pyrimidine metabolism; UMP biosynthesis via de novo pathway; (S)-dihydroorotate from bicarbonate: step 1/3. In terms of biological role, large subunit of the glutamine-dependent carbamoyl phosphate synthetase (CPSase). CPSase catalyzes the formation of carbamoyl phosphate from the ammonia moiety of glutamine, carbonate, and phosphate donated by ATP, constituting the first step of 2 biosynthetic pathways, one leading to arginine and/or urea and the other to pyrimidine nucleotides. The large subunit (synthetase) binds the substrates ammonia (free or transferred from glutamine from the small subunit), hydrogencarbonate and ATP and carries out an ATP-coupled ligase reaction, activating hydrogencarbonate by forming carboxy phosphate which reacts with ammonia to form carbamoyl phosphate. The sequence is that of Carbamoyl phosphate synthase large chain from Haemophilus ducreyi (strain 35000HP / ATCC 700724).